We begin with the raw amino-acid sequence, 276 residues long: ATP synthase subunit a (276 aa).

A run of 6 helical transmembrane segments spans residues 27-47 (ITMLAGLSVLNLFPLAALEVG), 61-81 (GQTFATSWFVILLLVIASLAA), 120-140 (LPFIGTLFLFIFVSNWSGALL), 159-179 (DINTTVALALLTSLAYFYAGL), 225-245 (LVVAVLVLLVPLLVPLPLMAL), and 246-266 (GLFTSAIQALVFATLAGAYIH).

Belongs to the ATPase A chain family. As to quaternary structure, F-type ATPases have 2 components, CF(1) - the catalytic core - and CF(0) - the membrane proton channel. CF(1) has five subunits: alpha(3), beta(3), gamma(1), delta(1), epsilon(1). CF(0) has four main subunits: a, b, b' and c.

The protein resides in the cellular thylakoid membrane. Functionally, key component of the proton channel; it plays a direct role in the translocation of protons across the membrane. The sequence is that of ATP synthase subunit a from Synechocystis sp. (strain ATCC 27184 / PCC 6803 / Kazusa).